Here is a 651-residue protein sequence, read N- to C-terminus: UvrABC system protein B (651 aa).

The Helicase ATP-binding domain occupies 25–178 (RGISCGAKEQ…CQLQERLVEL (154 aa)). 38 to 45 (GVTGSGKT) is a binding site for ATP. Positions 91–114 (YYDYYQPEAYIPQSDVYIEKDALI) match the Beta-hairpin motif. Positions 427-591 (DGQIHDVMCE…IVPRTIQKPV (165 aa)) constitute a Helicase C-terminal domain. Residues 593–615 (TSLSERVGSSRKKVSRDTNTDPA) are disordered. The region spanning 616-651 (NRDIVELQKEMLLCAENLDFERAVEIRNEIKRLTAP) is the UVR domain.

Belongs to the UvrB family. In terms of assembly, forms a heterotetramer with UvrA during the search for lesions. Interacts with UvrC in an incision complex.

The protein resides in the cytoplasm. The UvrABC repair system catalyzes the recognition and processing of DNA lesions. A damage recognition complex composed of 2 UvrA and 2 UvrB subunits scans DNA for abnormalities. Upon binding of the UvrA(2)B(2) complex to a putative damaged site, the DNA wraps around one UvrB monomer. DNA wrap is dependent on ATP binding by UvrB and probably causes local melting of the DNA helix, facilitating insertion of UvrB beta-hairpin between the DNA strands. Then UvrB probes one DNA strand for the presence of a lesion. If a lesion is found the UvrA subunits dissociate and the UvrB-DNA preincision complex is formed. This complex is subsequently bound by UvrC and the second UvrB is released. If no lesion is found, the DNA wraps around the other UvrB subunit that will check the other stand for damage. The polypeptide is UvrABC system protein B (Anaplasma marginale (strain Florida)).